Reading from the N-terminus, the 345-residue chain is Dense granule protein 4 (345 aa).

An N-terminal signal peptide occupies residues 1–20 (MQGTWFSLFVVVMVSHLACG). Positions 227–251 (SVSVSTEDSGLTGVKDSSSSESTVT) are enriched in polar residues. The disordered stretch occupies residues 227–271 (SVSVSTEDSGLTGVKDSSSSESTVTPADEAASESEEGDKTSRKSK). The chain crosses the membrane as a helical span at residues 276-296 (ILTGLGVAATLAAAAAAAKAV). The disordered stretch occupies residues 298 to 345 (GFGGTRTSTAPAEAGKTELDDGYRPPPFNPRPSPYAELLKDLERMRKE). Residues 321–330 (RPPPFNPRPS) show a composition bias toward pro residues. Over residues 335-345 (LLKDLERMRKE) the composition is skewed to basic and acidic residues.

In terms of processing, O-glycosylated.

It is found in the secreted. Its subcellular location is the parasitophorous vacuole lumen. It localises to the parasitophorous vacuole membrane. The protein resides in the cytoplasmic vesicle. The protein localises to the secretory vesicle. Functionally, major granular component involved in excreted-secreted antigen (ESA) immunity. The polypeptide is Dense granule protein 4 (GRA4) (Toxoplasma gondii).